The chain runs to 525 residues: MATLLKSLALFKRNKDKAPTASGSGGAIRGIKNVIIVPIPGDSSIITRSRLLDRLVRLAGDPDINGSKLTGVMISMLSLFVESPGQLIQRITDDPDVSIRLVEVVQSTRSQSGLTFASRGADLDNEADMYFSTEGPSSGSKKRINWFENREIIDIEVQDAEEFNMLLASILAQVWILLAKAVTAPDTAADSELRRWVKYTQQRRVIGEFRLDKGWLDAVRNRIAEDLSLRRFMVSLILDIKRTPGNKPRIAEMICDIDNYIVEAGLASFILTIKFGIETMYPALGLHEFAGELSTIESLMNLYQQLGEVAPYMVILENSIQNKFSAGAYPLLWSYAMGVGVELENSMGGLNFGRSYFDPAYFRLGQEMVRRSAGKVSSVIAAELGITAEEAKLVSEIASQTGDERTVRGTGPRQAQVSFLQHKTDEGESPTPATREEVKAAIPNGSEGRDTKRTRSGKPRGETPGQLLPEIMQEDELSRESSQNPREAQRSAEALFRLQAMAKILEDQEEGEDNSQIYNDKDLLS.

Residues 1 to 36 (MATLLKSLALFKRNKDKAPTASGSGGAIRGIKNVII) are homomultimerization. The interval 1-375 (MATLLKSLAL…QEMVRRSAGK (375 aa)) is RNA packaging and organization of the helical nucleocapsid. The interval 1 to 403 (MATLLKSLAL…VSEIASQTGD (403 aa)) is ncore. 5 residues coordinate RNA: Lys-180, Arg-195, Gln-202, Tyr-260, and Asn-351. The interval 373–391 (AGKVSSVIAAELGITAEEA) is homomultimerization. The interval 404–525 (ERTVRGTGPR…QIYNDKDLLS (122 aa)) is ntail. 2 disordered regions span residues 418-492 (SFLQ…QRSA) and 506-525 (EDQEEGEDNSQIYNDKDLLS). The tract at residues 477 to 505 (LSRESSQNPREAQRSAEALFRLQAMAKIL) is interaction with the phosphoprotein.

Belongs to the paramyxoviruses nucleocapsid family. In terms of assembly, homomultimer; forms the nucleocapsid. Binds to viral genomic RNA. N0 interacts with the phosphoprotein (via N-terminus); this interaction allows P to chaperon N0 to avoid N polymerization before encapsidation. Interacts as N-RNA template with the phosphoprotein (via C-terminus); this interaction positions the polymerase on the template. Interacts with the phosphoprotein; this interaction leads to the formation of membraneless organelles that function as viral replication factories. Interacts with host ISG15; this interaction disrupts the activity of the N0-P complex.

The protein localises to the virion. It localises to the host cytoplasm. In terms of biological role, forms the helical nucleocapsid (NC) in a ratio of 1 N per 6 ribonucleotides, protecting the genome from nucleases. The encapsidated genomic RNA serves as template for transcription and replication; encapsidation by N is coupled to RNA synthesis. Forms the encapsidation complex with the phosphoprotein protein P. Before encapsidation, the newly synthesized free N protein, so-called N0, is chaperoned by P. Participates, together with P, in the formation of viral factories (viroplasms), which are large inclusions in the host cytoplasm where replication takes place. In Peste-des-petits-ruminants virus (PPRV), this protein is Nucleoprotein (N).